The chain runs to 103 residues: 6-pyruvoyl tetrahydrobiopterin synthase (103 aa).

Ala1 carries the N-acetylalanine modification. His27 contacts Zn(2+). Active-site charge relay system residues include His53 and Glu92.

Belongs to the PTPS family. Homohexamer formed of two homotrimers in a head to head fashion. The cofactor is Zn(2+).

It catalyses the reaction 7,8-dihydroneopterin 3'-triphosphate = 6-pyruvoyl-5,6,7,8-tetrahydropterin + triphosphate + H(+). It participates in cofactor biosynthesis; tetrahydrobiopterin biosynthesis; tetrahydrobiopterin from 7,8-dihydroneopterin triphosphate: step 1/3. In terms of biological role, involved in the biosynthesis of tetrahydrobiopterin, an essential cofactor of aromatic amino acid hydroxylases. Catalyzes the transformation of 7,8-dihydroneopterin triphosphate into 6-pyruvoyl tetrahydropterin. The sequence is that of 6-pyruvoyl tetrahydrobiopterin synthase (pts) from Salmo salar (Atlantic salmon).